We begin with the raw amino-acid sequence, 196 residues long: Dephospho-CoA kinase (196 aa).

The DPCK domain occupies 3–196; sequence RIGLTGNIGC…KVYEELTRDP (194 aa). Residue 11–16 coordinates ATP; it reads GCGKST.

This sequence belongs to the CoaE family.

The protein localises to the cytoplasm. The catalysed reaction is 3'-dephospho-CoA + ATP = ADP + CoA + H(+). The protein operates within cofactor biosynthesis; coenzyme A biosynthesis; CoA from (R)-pantothenate: step 5/5. Catalyzes the phosphorylation of the 3'-hydroxyl group of dephosphocoenzyme A to form coenzyme A. In Aquifex aeolicus (strain VF5), this protein is Dephospho-CoA kinase.